Consider the following 75-residue polypeptide: Tautomerase PptA (75 aa).

The Proton acceptor; via imino nitrogen role is filled by Pro2.

This sequence belongs to the 4-oxalocrotonate tautomerase family. PptA subfamily. Homodimer.

The protein resides in the cytoplasm. The polypeptide is Tautomerase PptA (Klebsiella pneumoniae (strain 342)).